The sequence spans 635 residues: Chaperone protein HtpG (635 aa).

An a; substrate-binding region spans residues 1–343; that stretch reads MSVETQKETL…SNDLSLNVSR (343 aa). Residues 344–560 form a b region; the sequence is EILQKDPIID…EQDMGLQMRQ (217 aa). The c stretch occupies residues 561–635; that stretch reads ILEASGQKVP…LNKLLVELSV (75 aa).

It belongs to the heat shock protein 90 family. Homodimer.

It localises to the cytoplasm. In terms of biological role, molecular chaperone. Has ATPase activity. The protein is Chaperone protein HtpG of Pseudomonas syringae pv. tomato (strain ATCC BAA-871 / DC3000).